A 609-amino-acid chain; its full sequence is Large ribosomal subunit assembly factor BipA (609 aa).

In terms of domain architecture, tr-type G spans 3 to 198; it reads QNIRNIAIIA…AIIKYAPAPN (196 aa). GTP contacts are provided by residues 15 to 20 and 128 to 131; these read DHGKTT and NKID.

Belongs to the TRAFAC class translation factor GTPase superfamily. Classic translation factor GTPase family. BipA subfamily. Monomer.

It localises to the cytoplasm. The enzyme catalyses GTP + H2O = GDP + phosphate + H(+). Functionally, a 50S ribosomal subunit assembly protein with GTPase activity, required for 50S subunit assembly at low temperatures, may also play a role in translation. Binds GTP and analogs. Binds the 70S ribosome between the 30S and 50S subunits, in a similar position as ribosome-bound EF-G; it contacts a number of ribosomal proteins, both rRNAs and the A-site tRNA. This Buchnera aphidicola subsp. Schizaphis graminum (strain Sg) protein is Large ribosomal subunit assembly factor BipA.